Here is a 239-residue protein sequence, read N- to C-terminus: Ribonuclease PH (239 aa).

Phosphate contacts are provided by residues R87 and 125–127 (GTR).

It belongs to the RNase PH family. Homohexameric ring arranged as a trimer of dimers.

The enzyme catalyses tRNA(n+1) + phosphate = tRNA(n) + a ribonucleoside 5'-diphosphate. Functionally, phosphorolytic 3'-5' exoribonuclease that plays an important role in tRNA 3'-end maturation. Removes nucleotide residues following the 3'-CCA terminus of tRNAs; can also add nucleotides to the ends of RNA molecules by using nucleoside diphosphates as substrates, but this may not be physiologically important. Probably plays a role in initiation of 16S rRNA degradation (leading to ribosome degradation) during starvation. In Saccharophagus degradans (strain 2-40 / ATCC 43961 / DSM 17024), this protein is Ribonuclease PH.